Consider the following 311-residue polypeptide: Meiotically up-regulated gene 146 protein (311 aa).

It is found in the cytoplasm. The protein localises to the nucleus. Its function is as follows. Has a role in sporulation. This Schizosaccharomyces pombe (strain 972 / ATCC 24843) (Fission yeast) protein is Meiotically up-regulated gene 146 protein (mug146).